Consider the following 287-residue polypeptide: Nucleotide-binding protein VV0445 (287 aa).

Position 8–15 (8–15 (GHSGAGKS)) interacts with ATP. A GTP-binding site is contributed by 56–59 (DVRN).

The protein belongs to the RapZ-like family.

Functionally, displays ATPase and GTPase activities. The chain is Nucleotide-binding protein VV0445 from Vibrio vulnificus (strain YJ016).